A 335-amino-acid polypeptide reads, in one-letter code: Holliday junction branch migration complex subunit RuvB (335 aa).

Residues 4–184 (ADRLVSAEVL…FGIVQRLEFY (181 aa)) form a large ATPase domain (RuvB-L) region. ATP is bound by residues isoleucine 23, arginine 24, glycine 65, lysine 68, threonine 69, threonine 70, 131–133 (EDY), arginine 174, tyrosine 184, and arginine 221. Threonine 69 provides a ligand contact to Mg(2+). Positions 185–255 (NVDDLQSIVS…IATRALDMLS (71 aa)) are small ATPAse domain (RuvB-S). Residues 258–335 (AAGFDYLDRK…RHFGMVRNQE (78 aa)) form a head domain (RuvB-H) region. DNA-binding residues include arginine 294, arginine 313, and arginine 318.

It belongs to the RuvB family. In terms of assembly, homohexamer. Forms an RuvA(8)-RuvB(12)-Holliday junction (HJ) complex. HJ DNA is sandwiched between 2 RuvA tetramers; dsDNA enters through RuvA and exits via RuvB. An RuvB hexamer assembles on each DNA strand where it exits the tetramer. Each RuvB hexamer is contacted by two RuvA subunits (via domain III) on 2 adjacent RuvB subunits; this complex drives branch migration. In the full resolvosome a probable DNA-RuvA(4)-RuvB(12)-RuvC(2) complex forms which resolves the HJ.

The protein resides in the cytoplasm. The enzyme catalyses ATP + H2O = ADP + phosphate + H(+). Its function is as follows. The RuvA-RuvB-RuvC complex processes Holliday junction (HJ) DNA during genetic recombination and DNA repair, while the RuvA-RuvB complex plays an important role in the rescue of blocked DNA replication forks via replication fork reversal (RFR). RuvA specifically binds to HJ cruciform DNA, conferring on it an open structure. The RuvB hexamer acts as an ATP-dependent pump, pulling dsDNA into and through the RuvAB complex. RuvB forms 2 homohexamers on either side of HJ DNA bound by 1 or 2 RuvA tetramers; 4 subunits per hexamer contact DNA at a time. Coordinated motions by a converter formed by DNA-disengaged RuvB subunits stimulates ATP hydrolysis and nucleotide exchange. Immobilization of the converter enables RuvB to convert the ATP-contained energy into a lever motion, pulling 2 nucleotides of DNA out of the RuvA tetramer per ATP hydrolyzed, thus driving DNA branch migration. The RuvB motors rotate together with the DNA substrate, which together with the progressing nucleotide cycle form the mechanistic basis for DNA recombination by continuous HJ branch migration. Branch migration allows RuvC to scan DNA until it finds its consensus sequence, where it cleaves and resolves cruciform DNA. This Photorhabdus laumondii subsp. laumondii (strain DSM 15139 / CIP 105565 / TT01) (Photorhabdus luminescens subsp. laumondii) protein is Holliday junction branch migration complex subunit RuvB.